The chain runs to 64 residues: Large ribosomal subunit protein bL35 (64 aa).

Basic residues predominate over residues 1–42 (MPKAKTHSGASKRFRRTGTGKIVRQKANRRHLLEHKSSKRTR). Positions 1 to 64 (MPKAKTHSGA…TKRVKSLLNG (64 aa)) are disordered.

The protein belongs to the bacterial ribosomal protein bL35 family.

The sequence is that of Large ribosomal subunit protein bL35 from Mycobacterium ulcerans (strain Agy99).